The primary structure comprises 320 residues: Ribosomal RNA small subunit methyltransferase H (320 aa).

S-adenosyl-L-methionine-binding positions include 36–38, Asp56, Phe82, Asp103, and Gln110; that span reads GGH.

The protein belongs to the methyltransferase superfamily. RsmH family.

Its subcellular location is the cytoplasm. It carries out the reaction cytidine(1402) in 16S rRNA + S-adenosyl-L-methionine = N(4)-methylcytidine(1402) in 16S rRNA + S-adenosyl-L-homocysteine + H(+). Specifically methylates the N4 position of cytidine in position 1402 (C1402) of 16S rRNA. This Chromobacterium violaceum (strain ATCC 12472 / DSM 30191 / JCM 1249 / CCUG 213 / NBRC 12614 / NCIMB 9131 / NCTC 9757 / MK) protein is Ribosomal RNA small subunit methyltransferase H.